We begin with the raw amino-acid sequence, 259 residues long: Bisphosphoglycerate mutase (259 aa).

The residue at position 2 (Ser-2) is an N-acetylserine. Residues Lys-3 and Lys-5 are each glycosylated (N-linked (Glc) (glycation) lysine; in vitro). A substrate-binding site is contributed by 10–17 (RHGEGAWN). The active-site Tele-phosphohistidine intermediate is the His-11. N-linked (Glc) (glycation) lysine; in vitro glycosylation occurs at Lys-18. 23–24 (CS) serves as a coordination point for substrate. A glycan (N-linked (Glc) (glycation) lysine; in vitro) is linked at Lys-43. Substrate is bound by residues Arg-62, 89-92 (ERHY), Arg-100, and 116-117 (RR). Catalysis depends on Glu-89, which acts as the Proton donor/acceptor. Thr-122 carries the phosphothreonine modification. N-linked (Glc) (glycation) lysine glycosylation occurs at Lys-159. Substrate is bound at residue 189-190 (GN). Residue Lys-197 is glycosylated (N-linked (Glc) (glycation) lysine; in vitro).

Belongs to the phosphoglycerate mutase family. BPG-dependent PGAM subfamily. In terms of assembly, homodimer. Glycation of Lys-159 in diabetic patients inactivates the enzyme. As to expression, expressed in red blood cells. Expressed in non-erythroid cells of the placenta; present in the syncytiotrophoblast layer of the placental villi at the feto-maternal interface (at protein level).

The enzyme catalyses (2R)-3-phospho-glyceroyl phosphate = (2R)-2,3-bisphosphoglycerate + H(+). The catalysed reaction is (2R)-2-phosphoglycerate = (2R)-3-phosphoglycerate. With respect to regulation, at alkaline pH BPGM favors the synthase reaction; however, at lower pH the phosphatase reaction is dominant. Inhibited by citrate. Its function is as follows. Plays a major role in regulating hemoglobin oxygen affinity by controlling the levels of its allosteric effector 2,3-bisphosphoglycerate (2,3-BPG). Also exhibits mutase (EC 5.4.2.11) activity. In Homo sapiens (Human), this protein is Bisphosphoglycerate mutase (BPGM).